Reading from the N-terminus, the 328-residue chain is Arylacetonitrilase (328 aa).

The CN hydrolase domain maps to 5–278 (VRVAVTQAEP…EGIIYADLDL (274 aa)). The active-site Proton acceptor is the glutamate 45. Residue lysine 125 is part of the active site. Cysteine 160 (nucleophile) is an active-site residue.

The protein belongs to the carbon-nitrogen hydrolase superfamily. Nitrilase family.

It catalyses the reaction a nitrile + 2 H2O = a carboxylate + NH4(+). The enzyme catalyses 4-chlorophenylacetonitrile + 2 H2O = 4-chlorophenylacetate + NH4(+). Its function is as follows. Nitrilase that hydrolyzes preferentially phenylacetonitrile and (R,S)-mandelonitrile. Also acts on dinitriles like phenylenediacetonitriles (PDAs) 1,2-PDA, 1,3-PDA, and 1,4-PDA, and cyanophenyl acetonitriles (CPAs) 2-CPA and 4-CPA. The polypeptide is Arylacetonitrilase (nit2) (Aspergillus kawachii (strain NBRC 4308) (White koji mold)).